A 441-amino-acid polypeptide reads, in one-letter code: Probable D-serine dehydratase (441 aa).

Lys-101 carries the post-translational modification N6-(pyridoxal phosphate)lysine.

The protein belongs to the serine/threonine dehydratase family. DsdA subfamily. The cofactor is pyridoxal 5'-phosphate.

The catalysed reaction is D-serine = pyruvate + NH4(+). The protein is Probable D-serine dehydratase of Geobacillus kaustophilus (strain HTA426).